Consider the following 205-residue polypeptide: Ras-related protein RABC2b (205 aa).

A GTP-binding site is contributed by 20-27 (GDSGVGKS). Positions 41 to 49 (LAPTIGVDF) match the Effector region motif. GTP contacts are provided by residues 67–71 (DTAGQ), 127–130 (NKVD), and 157–158 (SA). S-geranylgeranyl cysteine attachment occurs at residues cysteine 202 and cysteine 203.

This sequence belongs to the small GTPase superfamily. Rab family.

The protein localises to the cell membrane. Functionally, intracellular vesicle trafficking and protein transport. In Arabidopsis thaliana (Mouse-ear cress), this protein is Ras-related protein RABC2b (RABC2B).